Reading from the N-terminus, the 431-residue chain is Isochorismate synthase MenF (431 aa).

The Proton acceptor role is filled by Lys-183. Glu-233 functions as the Proton donor in the catalytic mechanism. Mg(2+) is bound by residues Glu-277 and Glu-414.

It belongs to the isochorismate synthase family. Requires Mg(2+) as cofactor.

The catalysed reaction is chorismate = isochorismate. Its pathway is quinol/quinone metabolism; 1,4-dihydroxy-2-naphthoate biosynthesis; 1,4-dihydroxy-2-naphthoate from chorismate: step 1/7. The protein operates within quinol/quinone metabolism; menaquinone biosynthesis. Functionally, catalyzes the conversion of chorismate to isochorismate. The polypeptide is Isochorismate synthase MenF (Pasteurella multocida (strain Pm70)).